The following is a 225-amino-acid chain: Probable polyketide biosynthesis zinc-dependent hydrolase PksB (225 aa).

Residues H62, H64, D66, H67, H123, D140, and H181 each coordinate Zn(2+).

Belongs to the metallo-beta-lactamase superfamily. It depends on Zn(2+) as a cofactor.

Its subcellular location is the cytoplasm. It functions in the pathway antibiotic biosynthesis; bacillaene biosynthesis. Functionally, probably involved in some intermediate steps for the synthesis of the antibiotic polyketide bacillaene which is involved in secondary metabolism. The protein is Probable polyketide biosynthesis zinc-dependent hydrolase PksB (pksB) of Bacillus subtilis (strain 168).